A 62-amino-acid chain; its full sequence is Keratin-associated protein 8-1 (62 aa).

Residues 12–53 are 12 X 2 AA repeats of G-[YCGS]; that stretch reads GCYWGSYGYPLGYSVGCGYGSTYSPVGYGFGYGYNGSGAFGC.

The protein belongs to the KRTAP type 8 family. As to quaternary structure, interacts with wool keratins. As to expression, wool.

In terms of biological role, in the wool cortex, wool keratin intermediate filaments are embedded in an interfilamentous matrix, consisting of hair keratin-associated proteins (KRTAP), which are essential for the formation of a rigid and resistant wool shaft through their extensive disulfide bond cross-linking with abundant cysteine residues of wool keratins. The matrix proteins include the high-sulfur and high-glycine-tyrosine keratins. This Ovis aries (Sheep) protein is Keratin-associated protein 8-1 (KRTAP8-1).